A 205-amino-acid chain; its full sequence is Leucyl/phenylalanyl-tRNA--protein transferase (205 aa).

The protein belongs to the L/F-transferase family.

Its subcellular location is the cytoplasm. The enzyme catalyses N-terminal L-lysyl-[protein] + L-leucyl-tRNA(Leu) = N-terminal L-leucyl-L-lysyl-[protein] + tRNA(Leu) + H(+). It carries out the reaction N-terminal L-arginyl-[protein] + L-leucyl-tRNA(Leu) = N-terminal L-leucyl-L-arginyl-[protein] + tRNA(Leu) + H(+). The catalysed reaction is L-phenylalanyl-tRNA(Phe) + an N-terminal L-alpha-aminoacyl-[protein] = an N-terminal L-phenylalanyl-L-alpha-aminoacyl-[protein] + tRNA(Phe). Its function is as follows. Functions in the N-end rule pathway of protein degradation where it conjugates Leu, Phe and, less efficiently, Met from aminoacyl-tRNAs to the N-termini of proteins containing an N-terminal arginine or lysine. The polypeptide is Leucyl/phenylalanyl-tRNA--protein transferase (Mesorhizobium japonicum (strain LMG 29417 / CECT 9101 / MAFF 303099) (Mesorhizobium loti (strain MAFF 303099))).